The chain runs to 127 residues: Large ribosomal subunit protein bL12 (127 aa).

Positions 101–127 (VKTGVSKEEAEDAKKQLVESGAEVEIK) are disordered. Residues 105–117 (VSKEEAEDAKKQL) are compositionally biased toward basic and acidic residues.

This sequence belongs to the bacterial ribosomal protein bL12 family. As to quaternary structure, homodimer. Part of the ribosomal stalk of the 50S ribosomal subunit. Forms a multimeric L10(L12)X complex, where L10 forms an elongated spine to which 2 to 4 L12 dimers bind in a sequential fashion. Binds GTP-bound translation factors.

Functionally, forms part of the ribosomal stalk which helps the ribosome interact with GTP-bound translation factors. Is thus essential for accurate translation. The chain is Large ribosomal subunit protein bL12 from Geobacter metallireducens (strain ATCC 53774 / DSM 7210 / GS-15).